Consider the following 275-residue polypeptide: 4,5-DOPA dioxygenase extradiol 1 (275 aa).

Zn(2+)-binding residues include histidine 22, histidine 60, histidine 182, and histidine 236.

The protein belongs to the DODA-type extradiol aromatic ring-opening dioxygenase family. Zn(2+) serves as cofactor.

It catalyses the reaction L-dopa + O2 = 4-(L-alanin-3-yl)-2-hydroxy-cis,cis-muconate 6-semialdehyde + H(+). Its pathway is pigment biosynthesis; betalain biosynthesis. Opens the cyclic ring of dihydroxy-phenylalanine (DOPA) between carbons 4 and 5, thus producing an unstable seco-DOPA that rearranges nonenzymatically to betalamic acid. The chain is 4,5-DOPA dioxygenase extradiol 1 from Beta vulgaris (Sugar beet).